Consider the following 131-residue polypeptide: Proline-rich protein 3 (131 aa).

The interval 1–77 (LHRGPPGSRG…KEQRNPRRLK (77 aa)) is disordered. Pro residues predominate over residues 12-25 (MIPPLLSLPPPPRG). Positions 28–44 (PLRGGLGPRSGPYGRGW) are enriched in gly residues. The C3H1-type zinc-finger motif lies at 98 to 126 (KSDRPVCRHFAKKGHCRYEDLCAFYHPGA).

The polypeptide is Proline-rich protein 3 (PRR3) (Sus scrofa (Pig)).